A 310-amino-acid polypeptide reads, in one-letter code: Putative F-box protein PP2-B2 (310 aa).

Residues 1-34 (MIQSTMGHKQSVDSRGKGRKVPGSSSMVQKHRVE) form a disordered region. In terms of domain architecture, F-box spans 44–90 (PSLFDNLPEDCISNIISFTSPRDACVAASVSKTFESAVNSDSVWDKF).

The polypeptide is Putative F-box protein PP2-B2 (PP2B2) (Arabidopsis thaliana (Mouse-ear cress)).